Consider the following 3195-residue polypeptide: Large tegument protein deneddylase (3195 aa).

Positions 10–242 (VAAASRSQFD…VEVISAALRA (233 aa)) constitute a Peptidase C76 domain. Active-site residues include C30, D173, and H175. 4 disordered regions span residues 287 to 374 (RGTA…GALA), 2407 to 2776 (NPAH…DSNY), 2829 to 3068 (AGVG…AALD), and 3128 to 3147 (ASDLDDHQSDQPRESLAPLD). The span at 338 to 347 (KVKKPNKGKK) shows a compositional bias: basic residues. The segment covering 2470 to 2482 (KIERASGKNRKTE) has biased composition (basic and acidic residues). Over residues 2491 to 2503 (AARGRAAAPPTET) the composition is skewed to low complexity. Basic and acidic residues-rich tracts occupy residues 2504–2527 (KTTEKRQKCPPRESPLSRDERAPH) and 2538–2562 (RPPRGDSDDDRHKHETPHGVSDKAA). 2 stretches are compositionally biased toward basic residues: residues 2588-2615 (PKTKPRRTSSGLRRKHQASASVHKHRTH) and 2636-2648 (GRQRRSTLGGKKR). 2 stretches are compositionally biased toward basic and acidic residues: residues 2649–2672 (SGTDRTAEFLKKATCVDKLEKFSR) and 2687–2696 (ACDRLGERGN). Pro residues predominate over residues 2701-2712 (PRAPASSPPPPG). Basic and acidic residues predominate over residues 2714–2723 (QADHGIDQRE). 2 stretches are compositionally biased toward acidic residues: residues 2748–2768 (DDGDPAEEEDARDVEEGEEDV) and 2835–2844 (WSEEDEDAPA). Positions 2850 to 2864 (STNVEVATHGYTSDD) are enriched in polar residues. The span at 2869 to 2878 (DESKRARATR) shows a compositional bias: basic and acidic residues. Positions 2887-2903 (PASPLAPSTPSSLPTPA) are enriched in low complexity. Residues 2959 to 2981 (DDARKKQENSSHERKDDGVRWEI) are compositionally biased toward basic and acidic residues. Residues 2982 to 2994 (DLDSDQGDYSDAS) are compositionally biased toward acidic residues. 3 stretches are compositionally biased toward basic and acidic residues: residues 2995–3021 (DDCKIPDGPRVAPEKDIKNKQLEKSES), 3050–3062 (SDDKAGNRKDPKL), and 3131–3140 (LDDHQSDQPR).

It belongs to the herpesviridae large tegument protein family. In terms of assembly, interacts with host CUL1 and CUL4A; these interactions inhibit the E3 ligase activity of cullins. Interacts with inner tegument protein. Interacts with capsid vertex specific component CVC2. Interacts with the major capsid protein/MCP.

The protein localises to the virion tegument. It is found in the host cytoplasm. Its subcellular location is the host nucleus. It carries out the reaction Thiol-dependent hydrolysis of ester, thioester, amide, peptide and isopeptide bonds formed by the C-terminal Gly of ubiquitin (a 76-residue protein attached to proteins as an intracellular targeting signal).. Functionally, large tegument protein that plays multiple roles in the viral cycle. During viral entry, remains associated with the capsid while most of the tegument is detached and participates in the capsid transport toward the host nucleus. Plays a role in the routing of the capsid at the nuclear pore complex and subsequent uncoating. Within the host nucleus, acts as a deneddylase and promotes the degradation of nuclear CRLs (cullin-RING ubiquitin ligases) and thereby stabilizes nuclear CRL substrates, while cytoplasmic CRLs remain unaffected. These modifications prevent host cell cycle S-phase progression and create a favorable environment allowing efficient viral genome replication. Participates later in the secondary envelopment of capsids. Indeed, plays a linker role for the association of the outer viral tegument to the capsids together with the inner tegument protein. This chain is Large tegument protein deneddylase (UL36), found in Amazona oratrix (yellow-headed parrot).